Consider the following 380-residue polypeptide: Guanine nucleotide-binding protein subunit beta (380 aa).

7 WD repeats span residues 64 to 94 (GHSG…IVWN), 106 to 136 (LHCP…SIFN), 155 to 186 (GHKG…VLWD), 203 to 234 (GHTA…RLWD), 247 to 277 (GHED…RLFD), 296 to 326 (NELP…YVWD), and 342 to 372 (SHDG…KIWA).

Belongs to the WD repeat G protein beta family. In terms of assembly, g proteins are composed of 3 units, alpha, beta and gamma. As to expression, present in the root, leaf and tassel.

In terms of biological role, guanine nucleotide-binding proteins (G proteins) are involved as a modulator or transducer in various transmembrane signaling systems. The beta and gamma chains are required for the GTPase activity, for replacement of GDP by GTP, and for G protein-effector interaction. This is Guanine nucleotide-binding protein subunit beta (GB1) from Zea mays (Maize).